Reading from the N-terminus, the 178-residue chain is Probable DNA-directed RNA polymerase subunit delta (178 aa).

One can recognise an HTH HARE-type domain in the interval leucine 14–tryptophan 81. Residues aspartate 120–serine 143 are compositionally biased toward acidic residues. Positions aspartate 120–asparagine 178 are disordered.

It belongs to the RpoE family. As to quaternary structure, RNAP is composed of a core of 2 alpha, a beta and a beta' subunits. The core is associated with a delta subunit and one of several sigma factors.

Its function is as follows. Participates in both the initiation and recycling phases of transcription. In the presence of the delta subunit, RNAP displays an increased specificity of transcription, a decreased affinity for nucleic acids, and an increased efficiency of RNA synthesis because of enhanced recycling. The chain is Probable DNA-directed RNA polymerase subunit delta from Pediococcus pentosaceus (strain ATCC 25745 / CCUG 21536 / LMG 10740 / 183-1w).